We begin with the raw amino-acid sequence, 731 residues long: RNA-binding protein RMD9-like, mitochondrial (731 aa).

Residues 1–10 (MIRLAQQTQV) show a composition bias toward polar residues. Disordered regions lie at residues 1 to 29 (MIRL…NSLT), 77 to 133 (GGNI…GNSI), and 590 to 630 (QNDR…FNNP). The span at 83–100 (NNNNHLAQNNSNNSNNHH) shows a compositional bias: low complexity. Residues 101 to 122 (NNNRNHHHNNNRNHHQNNHNHS) show a composition bias toward basic residues. Serine 132 is subject to Phosphoserine. Residues 598–617 (SNMNSTQISRTATPSPSLTP) are compositionally biased toward polar residues.

It belongs to the RMD9 family. In terms of assembly, monomer. Post-translationally, phosphorylated. Phosphorylation promotes binding to RNA.

It is found in the mitochondrion inner membrane. Functionally, may be involved in the processing or stability of mitochondrial mRNAs. This is RNA-binding protein RMD9-like, mitochondrial from Saccharomyces cerevisiae (strain ATCC 204508 / S288c) (Baker's yeast).